The following is an 85-amino-acid chain: Small integral membrane protein 35 (85 aa).

Residues 7 to 27 (ISTLGMILGVGLSLLLVSILG) traverse the membrane as a helical segment.

It localises to the membrane. This Mus musculus (Mouse) protein is Small integral membrane protein 35.